The sequence spans 359 residues: Chorismate synthase (359 aa).

Arg48 and Arg54 together coordinate NADP(+). FMN-binding positions include 129 to 131 (RSS), 241 to 242 (NA), Gly285, 300 to 304 (KPTSS), and Arg326.

The protein belongs to the chorismate synthase family. Homotetramer. It depends on FMNH2 as a cofactor.

The catalysed reaction is 5-O-(1-carboxyvinyl)-3-phosphoshikimate = chorismate + phosphate. Its pathway is metabolic intermediate biosynthesis; chorismate biosynthesis; chorismate from D-erythrose 4-phosphate and phosphoenolpyruvate: step 7/7. In terms of biological role, catalyzes the anti-1,4-elimination of the C-3 phosphate and the C-6 proR hydrogen from 5-enolpyruvylshikimate-3-phosphate (EPSP) to yield chorismate, which is the branch point compound that serves as the starting substrate for the three terminal pathways of aromatic amino acid biosynthesis. This reaction introduces a second double bond into the aromatic ring system. The chain is Chorismate synthase from Afipia carboxidovorans (strain ATCC 49405 / DSM 1227 / KCTC 32145 / OM5) (Oligotropha carboxidovorans).